A 1064-amino-acid polypeptide reads, in one-letter code: Carbamoyl phosphate synthase pyrimidine-specific large chain (1064 aa).

Residues 1-401 form a carboxyphosphate synthetic domain region; the sequence is MPKRRDIETI…SLLKAVRSLE (401 aa). Residues arginine 129, arginine 169, glycine 175, glycine 176, arginine 208, isoleucine 210, glycine 241, isoleucine 242, histidine 243, glutamine 284, and glutamate 298 each coordinate ATP. The region spanning 133 to 327 is the ATP-grasp 1 domain; sequence RALMNELGEP…IAKLAAKIAV (195 aa). Mg(2+)-binding residues include glutamine 284, glutamate 298, and asparagine 300. Mn(2+) is bound by residues glutamine 284, glutamate 298, and asparagine 300. The interval 402–546 is oligomerization domain; it reads IGVHHLELNE…YSTYEEENES (145 aa). A carbamoyl phosphate synthetic domain region spans residues 547-929; that stretch reads IVTEKPSVIV…ALYKGLVASG (383 aa). Residues 671-861 form the ATP-grasp 2 domain; that stretch reads EQALSELGIP…MANLATKAIL (191 aa). Arginine 707, arginine 746, isoleucine 748, glutamate 752, glycine 777, valine 778, histidine 779, serine 780, glutamine 820, and glutamate 832 together coordinate ATP. 3 residues coordinate Mg(2+): glutamine 820, glutamate 832, and asparagine 834. Mn(2+) contacts are provided by glutamine 820, glutamate 832, and asparagine 834. The 135-residue stretch at 930-1064 folds into the MGS-like domain; it reads IQIQPHGAVL…TAMTEGLVRS (135 aa). Residues 930–1064 form an allosteric domain region; the sequence is IQIQPHGAVL…TAMTEGLVRS (135 aa).

It belongs to the CarB family. In terms of assembly, composed of two chains; the small (or glutamine) chain promotes the hydrolysis of glutamine to ammonia, which is used by the large (or ammonia) chain to synthesize carbamoyl phosphate. Tetramer of heterodimers (alpha,beta)4. Mg(2+) is required as a cofactor. Mn(2+) serves as cofactor.

It carries out the reaction hydrogencarbonate + L-glutamine + 2 ATP + H2O = carbamoyl phosphate + L-glutamate + 2 ADP + phosphate + 2 H(+). It catalyses the reaction hydrogencarbonate + NH4(+) + 2 ATP = carbamoyl phosphate + 2 ADP + phosphate + 2 H(+). It participates in amino-acid biosynthesis; L-arginine biosynthesis; carbamoyl phosphate from bicarbonate: step 1/1. The protein operates within pyrimidine metabolism; UMP biosynthesis via de novo pathway; (S)-dihydroorotate from bicarbonate: step 1/3. Functionally, small subunit of the glutamine-dependent carbamoyl phosphate synthetase (CPSase). CPSase catalyzes the formation of carbamoyl phosphate from the ammonia moiety of glutamine, carbonate, and phosphate donated by ATP, constituting the first step of the biosynthetic pathway leading to pyrimidine nucleotides. The large subunit (synthetase) binds the substrates ammonia (free or transferred from glutamine from the small subunit), hydrogencarbonate and ATP and carries out an ATP-coupled ligase reaction, activating hydrogencarbonate by forming carboxy phosphate which reacts with ammonia to form carbamoyl phosphate. In Geobacillus stearothermophilus (Bacillus stearothermophilus), this protein is Carbamoyl phosphate synthase pyrimidine-specific large chain (pyrAB).